A 311-amino-acid polypeptide reads, in one-letter code: Olfactory receptor 10D1B (311 aa).

At 1–24 (MKNLSVVTQFILLGIPHTEGVETM) the chain is on the extracellular side. A helical membrane pass occupies residues 25–45 (LFVLFFSFYIFTLVGNLLILL). Residues 46–54 (AIVSSSRLH) lie on the Cytoplasmic side of the membrane. A helical transmembrane segment spans residues 55-75 (TPMYFFLCQLSVCDIFFPSVS). Residues 76–95 (SPKMLFYLSGNTPAISYAGC) are Extracellular-facing. A disulfide bridge connects residues Cys95 and Cys187. Residues 96-116 (VSQLFFYHFLGGTECFLYTVM) traverse the membrane as a helical segment. The Cytoplasmic segment spans residues 117–137 (AYDRFVAICYPLRYSVIMSHR). Residues 138–158 (ICAFLAMGTAVFGCIHSTFLT) traverse the membrane as a helical segment. Over 159–192 (TLTFQLPYCGPKDVNYYFCDIPVVMKLACADTST) the chain is Extracellular. The chain crosses the membrane as a helical span at residues 193–213 (LEMVGFISVGLMPLSCFFFIL). Over 214–237 (TSYSCIVRSILQIRSTEGRHRAFS) the chain is Cytoplasmic. The chain crosses the membrane as a helical span at residues 238–258 (TCSAHFTAILLFYMPVIFIYL). At 259-271 (RPTPSPWLDATVQ) the chain is on the extracellular side. A helical transmembrane segment spans residues 272-288 (ILNNLVTPMLNPLIYSL). Residues 289–311 (RNKEVKSSLWTVLHLLCFLPKHL) are Cytoplasmic-facing.

Belongs to the G-protein coupled receptor 1 family.

It is found in the cell membrane. Functionally, odorant receptor. The protein is Olfactory receptor 10D1B of Mus musculus (Mouse).